The chain runs to 335 residues: tRNA N6-adenosine threonylcarbamoyltransferase (335 aa).

Residues histidine 110 and histidine 114 each contribute to the Fe cation site. Substrate is bound by residues 132–136, aspartate 165, glycine 178, and asparagine 271; that span reads LVSGG. Aspartate 299 contributes to the Fe cation binding site.

It belongs to the KAE1 / TsaD family. The cofactor is Fe(2+).

It localises to the cytoplasm. The catalysed reaction is L-threonylcarbamoyladenylate + adenosine(37) in tRNA = N(6)-L-threonylcarbamoyladenosine(37) in tRNA + AMP + H(+). Required for the formation of a threonylcarbamoyl group on adenosine at position 37 (t(6)A37) in tRNAs that read codons beginning with adenine. Is involved in the transfer of the threonylcarbamoyl moiety of threonylcarbamoyl-AMP (TC-AMP) to the N6 group of A37, together with TsaE and TsaB. TsaD likely plays a direct catalytic role in this reaction. This is tRNA N6-adenosine threonylcarbamoyltransferase from Campylobacter jejuni subsp. jejuni serotype O:2 (strain ATCC 700819 / NCTC 11168).